A 110-amino-acid polypeptide reads, in one-letter code: uncharacterized protein (110 aa).

2 disordered regions span residues 1–42 (MEWG…RAQQ) and 66–110 (RQLG…AAEP). Residues 36–68 (REERAQQLLDAVEQRQRQLLDTIAACEEMLRQL) are a coiled coil.

This is an uncharacterized protein from Homo sapiens (Human).